A 326-amino-acid polypeptide reads, in one-letter code: D-alanine--D-alanine ligase (326 aa).

The region spanning 112–312 (KRIWRFEGLP…YENLCLGILA (201 aa)) is the ATP-grasp domain. Position 138–193 (138–193 (LQALGAPMIVKPSREGSTIGLTKVWTAEECDQAYVLASRYDPEVLCEEFIEGDETT)) interacts with ATP. The Mg(2+) site is built by Asp265, Glu279, and Asn281.

The protein belongs to the D-alanine--D-alanine ligase family. It depends on Mg(2+) as a cofactor. Requires Mn(2+) as cofactor.

The protein resides in the cytoplasm. It catalyses the reaction 2 D-alanine + ATP = D-alanyl-D-alanine + ADP + phosphate + H(+). It functions in the pathway cell wall biogenesis; peptidoglycan biosynthesis. In terms of biological role, cell wall formation. This chain is D-alanine--D-alanine ligase, found in Delftia acidovorans (strain DSM 14801 / SPH-1).